The primary structure comprises 206 residues: Uridine kinase (206 aa).

ATP is bound at residue 9–16 (GGSGSGKT).

The protein belongs to the uridine kinase family.

It localises to the cytoplasm. It catalyses the reaction uridine + ATP = UMP + ADP + H(+). It carries out the reaction cytidine + ATP = CMP + ADP + H(+). It functions in the pathway pyrimidine metabolism; CTP biosynthesis via salvage pathway; CTP from cytidine: step 1/3. The protein operates within pyrimidine metabolism; UMP biosynthesis via salvage pathway; UMP from uridine: step 1/1. This is Uridine kinase from Borrelia garinii subsp. bavariensis (strain ATCC BAA-2496 / DSM 23469 / PBi) (Borreliella bavariensis).